A 342-amino-acid chain; its full sequence is Phosphate acyltransferase (342 aa).

The protein belongs to the PlsX family. As to quaternary structure, homodimer. Probably interacts with PlsY.

The protein localises to the cytoplasm. The catalysed reaction is a fatty acyl-[ACP] + phosphate = an acyl phosphate + holo-[ACP]. The protein operates within lipid metabolism; phospholipid metabolism. Its function is as follows. Catalyzes the reversible formation of acyl-phosphate (acyl-PO(4)) from acyl-[acyl-carrier-protein] (acyl-ACP). This enzyme utilizes acyl-ACP as fatty acyl donor, but not acyl-CoA. The chain is Phosphate acyltransferase from Shewanella pealeana (strain ATCC 700345 / ANG-SQ1).